We begin with the raw amino-acid sequence, 702 residues long: Polyribonucleotide nucleotidyltransferase (702 aa).

Residues Asp-485 and Asp-491 each contribute to the Mg(2+) site. The region spanning Pro-552–Ile-612 is the KH domain. In terms of domain architecture, S1 motif spans Gly-622–Lys-690.

It belongs to the polyribonucleotide nucleotidyltransferase family. The cofactor is Mg(2+).

The protein resides in the cytoplasm. It carries out the reaction RNA(n+1) + phosphate = RNA(n) + a ribonucleoside 5'-diphosphate. Functionally, involved in mRNA degradation. Catalyzes the phosphorolysis of single-stranded polyribonucleotides processively in the 3'- to 5'-direction. This chain is Polyribonucleotide nucleotidyltransferase, found in Clostridium botulinum (strain Kyoto / Type A2).